We begin with the raw amino-acid sequence, 222 residues long: Capsular polysaccharide type 8 biosynthesis protein cap8A (222 aa).

A run of 2 helical transmembrane segments spans residues 20 to 40 (ILIILPLLFLIISAIVTFFVL) and 172 to 192 (VVNLIGAFFLGLVVALIYIFF).

This sequence belongs to the CpsC/CapA family.

It localises to the cell membrane. Functionally, required for the biosynthesis of type 8 capsular polysaccharide (Cap8/CP8). Might act as the chain-length regulator. The sequence is that of Capsular polysaccharide type 8 biosynthesis protein cap8A (cap8A) from Staphylococcus aureus.